The following is a 653-amino-acid chain: Macrolide export ATP-binding/permease protein MacB (653 aa).

The ABC transporter domain occupies 6–244 (LQLTRVTRRF…DAASGASGDA (239 aa)). 42 to 49 (GASGSGKS) provides a ligand contact to ATP. 4 consecutive transmembrane segments (helical) span residues 278–298 (LLTM…VAIG), 526–546 (LTLL…IGVM), 587–607 (MGGA…SLFV), and 616–636 (AGSI…FGFM).

It belongs to the ABC transporter superfamily. Macrolide exporter (TC 3.A.1.122) family. In terms of assembly, homodimer.

It is found in the cell inner membrane. Its function is as follows. Non-canonical ABC transporter that contains transmembrane domains (TMD), which form a pore in the inner membrane, and an ATP-binding domain (NBD), which is responsible for energy generation. Confers resistance against macrolides. The chain is Macrolide export ATP-binding/permease protein MacB from Burkholderia thailandensis (strain ATCC 700388 / DSM 13276 / CCUG 48851 / CIP 106301 / E264).